The chain runs to 192 residues: Signal peptidase complex subunit 2 (192 aa).

The Cytoplasmic portion of the chain corresponds to 1-46 (MEEKKTESTNKNVKKANLLDHHSIKHILDESVSDIVTSRGYKEDVR). A helical transmembrane segment spans residues 47 to 69 (LSNLKLILGTIIIVVALVAQFYN). The Lumenal portion of the chain corresponds to 70–78 (KKFPENRDF). The chain crosses the membrane as a helical span at residues 79–98 (LIGCIALYVVLNAVLQLILY). The Cytoplasmic portion of the chain corresponds to 99-192 (TKEKNAILFT…YAEEEPKKKK (94 aa)).

The protein belongs to the SPCS2 family. Component of the signal peptidase complex (SPC) composed of a catalytic subunit SEC11 and three accessory subunits SPCS1, SPCS2 and SPCS3. The complex induces a local thinning of the ER membrane which is used to measure the length of the signal peptide (SP) h-region of protein substrates. This ensures the selectivity of the complex towards h-regions shorter than 18-20 amino acids.

The protein localises to the endoplasmic reticulum membrane. Component of the signal peptidase complex (SPC) which catalyzes the cleavage of N-terminal signal sequences from nascent proteins as they are translocated into the lumen of the endoplasmic reticulum. Enhances the enzymatic activity of SPC and facilitates the interactions between different components of the translocation site. This is Signal peptidase complex subunit 2 from Arabidopsis thaliana (Mouse-ear cress).